A 919-amino-acid polypeptide reads, in one-letter code: Exostosin-like 3 (919 aa).

Topologically, residues 1–30 (MTGYTMLRNGGAGNGGQTCMLRWSNRIRLT) are cytoplasmic. Positions 1–140 (MTGYTMLRNG…LKNVISQTEH (140 aa)) are required for interaction with REG3A. The chain crosses the membrane as a helical; Signal-anchor for type II membrane protein span at residues 31 to 51 (WLSFTLFVILVFFPLIAHYYL). The Lumenal portion of the chain corresponds to 52 to 919 (TTLDEADEAG…HDKTKCFKFI (868 aa)). Disulfide bonds link C177–C182 and C188–C236. N-linked (GlcNAc...) asparagine glycosylation is present at N290. A Phosphoserine modification is found at S362. C400 and C415 are disulfide-bonded. N592 is a glycosylation site (N-linked (GlcNAc...) asparagine). UDP-N-acetyl-alpha-D-glucosamine-binding residues include L668, R672, N697, N723, R728, D744, D745, and D746. D746 lines the Mn(2+) pocket. N790 carries N-linked (GlcNAc...) asparagine glycosylation. C831 and C879 are oxidised to a cystine. UDP-N-acetyl-alpha-D-glucosamine-binding residues include E832, D833, and R876. D833 is an active-site residue.

This sequence belongs to the glycosyltransferase 47 family. In terms of assembly, homodimer; disulfide-linked. Interacts with REG3A. Mn(2+) is required as a cofactor. Ubiquitous. Expressed in keratinocytes. Expressed in pancreas.

Its subcellular location is the endoplasmic reticulum membrane. It localises to the golgi apparatus. The protein resides in the cell membrane. The protein localises to the nucleus. It carries out the reaction 3-O-(beta-D-GlcA-(1-&gt;3)-beta-D-Gal-(1-&gt;3)-beta-D-Gal-(1-&gt;4)-beta-D-Xyl)-L-seryl-[protein] + UDP-N-acetyl-alpha-D-glucosamine = 3-O-(alpha-D-GlcNAc-(1-&gt;4)-beta-D-GlcA-(1-&gt;3)-beta-D-Gal-(1-&gt;3)-beta-D-Gal-(1-&gt;4)-beta-D-Xyl)-L-seryl-[protein] + UDP + H(+). It functions in the pathway glycan metabolism; heparan sulfate biosynthesis. Its function is as follows. Glycosyltransferase which regulates the biosynthesis of heparan sulfate (HS). Initiates HS synthesis by transferring the first N-acetyl-alpha-D-glucosamine (alpha-GlcNAc) residue (GlcNAcT-I activity) to the tetrasaccharide linker (GlcA-Gal-Gal-Xyl-)Ser core linker. May also transfer alpha-GlcNAc residues during HS elongation (GlcNAcT-II activity). Lacks glucuronyl transferase II (GlcAT-II) activity. Important for both skeletal development and hematopoiesis, through the formation of HS proteoglycans (HSPGs). Through the synthesis of HS, regulates postnatal pancreatic islet maturation and insulin secretion. Receptor for REG3A, REG3B and REG3G, induces the activation of downstream signaling pathways such as PI3K-AKT or RAS-RAF-MEK-ERK signaling pathway. Required for the function of REG3A in regulating keratinocyte proliferation and differentiation. Required for the inhibition of skin inflammation mediated by REG3A through the activation of PI3K-AKT-STAT3 pathway. Required for the function of REG3A and REG3G in glucose tolerance in pancreas. Expressed in microglia, is activated by nociceptor-derived REG3G in response to endotoxins, leading to the inhibition of kynurenine pathway to prevent endotoxic death. The polypeptide is Exostosin-like 3 (Homo sapiens (Human)).